The primary structure comprises 200 residues: Recombination protein RecR (200 aa).

The C4-type zinc finger occupies 59-74; the sequence is CDICGNVCETSPCPVC. The Toprim domain occupies 82-177; it reads SVICVVEEPK…KVTRLASGLP (96 aa).

The protein belongs to the RecR family.

May play a role in DNA repair. It seems to be involved in an RecBC-independent recombinational process of DNA repair. It may act with RecF and RecO. This Bifidobacterium adolescentis (strain ATCC 15703 / DSM 20083 / NCTC 11814 / E194a) protein is Recombination protein RecR.